The primary structure comprises 415 residues: Ribulose bisphosphate carboxylase large chain (415 aa).

2 residues coordinate substrate: N101 and T151. The active-site Proton acceptor is the K153. K155 is a binding site for substrate. Mg(2+) contacts are provided by K179, D181, and E182. At K179 the chain carries N6-carboxylysine. H272 acts as the Proton acceptor in catalysis. R273, H305, and S357 together coordinate substrate.

It belongs to the RuBisCO large chain family. Type I subfamily. In terms of assembly, heterohexadecamer of 8 large chains and 8 small chains; disulfide-linked. The disulfide link is formed within the large subunit homodimers. Requires Mg(2+) as cofactor. Post-translationally, the disulfide bond which can form in the large chain dimeric partners within the hexadecamer appears to be associated with oxidative stress and protein turnover.

The protein resides in the plastid. The protein localises to the chloroplast. It carries out the reaction 2 (2R)-3-phosphoglycerate + 2 H(+) = D-ribulose 1,5-bisphosphate + CO2 + H2O. The enzyme catalyses D-ribulose 1,5-bisphosphate + O2 = 2-phosphoglycolate + (2R)-3-phosphoglycerate + 2 H(+). RuBisCO catalyzes two reactions: the carboxylation of D-ribulose 1,5-bisphosphate, the primary event in carbon dioxide fixation, as well as the oxidative fragmentation of the pentose substrate in the photorespiration process. Both reactions occur simultaneously and in competition at the same active site. The protein is Ribulose bisphosphate carboxylase large chain of Cibotium barometz (Scythian lamb).